A 207-amino-acid chain; its full sequence is Small ribosomal subunit protein uS4c (207 aa).

An S4 RNA-binding domain is found at 92–150; sequence MRLDNILFRLGFVPTIPSARQLINHRHILVNNRIVDVPSFHCKPKDIITIGSPKTYQSI.

Belongs to the universal ribosomal protein uS4 family. Part of the 30S ribosomal subunit. Contacts protein S5. The interaction surface between S4 and S5 is involved in control of translational fidelity.

The protein resides in the plastid. It localises to the chloroplast. In terms of biological role, one of the primary rRNA binding proteins, it binds directly to 16S rRNA where it nucleates assembly of the body of the 30S subunit. Its function is as follows. With S5 and S12 plays an important role in translational accuracy. The protein is Small ribosomal subunit protein uS4c (rps4) of Equisetum variegatum (Variegated horsetail).